The sequence spans 171 residues: ATP synthase subunit b (171 aa).

A helical membrane pass occupies residues 24–44 (INLVIVIGVLYWFLKGFLGGI).

This sequence belongs to the ATPase B chain family. As to quaternary structure, F-type ATPases have 2 components, F(1) - the catalytic core - and F(0) - the membrane proton channel. F(1) has five subunits: alpha(3), beta(3), gamma(1), delta(1), epsilon(1). F(0) has four main subunits: a(1), b(1), b'(1) and c(10-14). The alpha and beta chains form an alternating ring which encloses part of the gamma chain. F(1) is attached to F(0) by a central stalk formed by the gamma and epsilon chains, while a peripheral stalk is formed by the delta, b and b' chains.

It localises to the cellular thylakoid membrane. F(1)F(0) ATP synthase produces ATP from ADP in the presence of a proton or sodium gradient. F-type ATPases consist of two structural domains, F(1) containing the extramembraneous catalytic core and F(0) containing the membrane proton channel, linked together by a central stalk and a peripheral stalk. During catalysis, ATP synthesis in the catalytic domain of F(1) is coupled via a rotary mechanism of the central stalk subunits to proton translocation. Functionally, component of the F(0) channel, it forms part of the peripheral stalk, linking F(1) to F(0). The polypeptide is ATP synthase subunit b (Synechococcus sp. (strain WH7803)).